An 805-amino-acid chain; its full sequence is MFDITRKCVEWGDRLLVIESGKIARQADGAVVVDYGGTSVLSTVVSQKSKEPVDFLPLTVQFLAKSYAIGRIPGGFFKREGKPSDRETLISRLVDRSIRPLFPTGFCDEIVIVCNLLSYDQVSPPETVALIGAAAALAISGIPFPTPIAGAKIGYIREEERYILNPSAEELARSELDMFYSGTKSSVVMVESEASELSEEEMLGAVTFGHENCAQVLDLIEEFAEAAGPKDVVEFVPHDIGKVVSDISSGYSEKFSVAYSDHNKKPECSSLMPPGKACTQICAGKHVEESGEYTEQEVLLAIKTFERSLVRARVLDTLKRVDGRGFDQIRNIEIEVDLIPRSHGSALFTRGDTQALVITALGTPQDEQVVDGFDGDRRERFLLHYNFPSYAVGEAAALRPPGRREIGHGKLAWRAIHPVLPTKADFPYTIRVVSEITESDGSSSMATVCGASLALMDTGVPLKSSVAGIAMGLIKEGDRYAVLSDIIGDEDYLGDMDFKVAGTKDGITALQMDMKIRGIGFDIIEKSLQQAKDGRLFIIGKMDKVIKESREGVRDHVPRMESMIIDKNKIKNVIGTGGKNVREICEKTGVKIEISQDGTVMIYAVSRDAVEEAKNMIMCIVSEPEVGKVFSGVISEIAKYGAFVSFLGGRRGLVHISEIKNEHIGSVSDVLAVDDKVKVLVIGIDKDHVQLSMRRVDQDSGDLLEHESYSSNKKNGPQFGDASGGASGFRDYASGPARERRRSGGSGGRPVRRRSAGSSGSGSGGCYSVPQHVGTPDPVHGNDRRRGSGPQHASGGGGNKKPRFF.

Mg(2+)-binding residues include D491 and D497. Residues 558 to 617 (PRMESMIIDKNKIKNVIGTGGKNVREICEKTGVKIEISQDGTVMIYAVSRDAVEEAKNMI) form the KH domain. One can recognise an S1 motif domain in the interval 627-694 (GKVFSGVISE…DKDHVQLSMR (68 aa)). A disordered region spans residues 702–805 (DLLEHESYSS…GGGNKKPRFF (104 aa)).

This sequence belongs to the polyribonucleotide nucleotidyltransferase family. Requires Mg(2+) as cofactor.

The protein resides in the cytoplasm. The catalysed reaction is RNA(n+1) + phosphate = RNA(n) + a ribonucleoside 5'-diphosphate. Functionally, involved in mRNA degradation. Catalyzes the phosphorolysis of single-stranded polyribonucleotides processively in the 3'- to 5'-direction. This chain is Polyribonucleotide nucleotidyltransferase, found in Anaplasma marginale (strain Florida).